Consider the following 1043-residue polypeptide: Ack-related non-receptor tyrosine kinase (1043 aa).

The region spanning 113–379 (ITLCKELGQG…SDIVAKFPER (267 aa)) is the Protein kinase domain. ATP-binding positions include 119–127 (LGQGEFGSV) and K146. D241 functions as the Proton acceptor in the catalytic mechanism. One can recognise an SH3 domain in the interval 379 to 444 (RRAQSVRAVV…RPTDTVAHLG (66 aa)). The tract at residues 443–481 (LGSEPPCSNGTIENGFSEKEKGGKKNKKAEKESERERKK) is disordered. The segment covering 458-481 (FSEKEKGGKKNKKAEKESERERKK) has biased composition (basic and acidic residues). The CRIB domain maps to 484–498 (ISEPVGDVRHTCHVG). Disordered stretches follow at residues 514–644 (MCPT…SAAN), 790–842 (KINE…GWSS), 859–898 (KQASVSPPPMSPTSSRLSTLDRSSISPAPPRPVTPPLSVR), and 932–993 (LIDG…RQFP). Low complexity predominate over residues 516–543 (PTSSSPSTSRGSQASPAPSHTSSSTTSS). Residues 610–624 (GNQHSVQVHDQFSSL) are compositionally biased toward polar residues. Over residues 630–644 (SLTPTAPPLTASAAN) the composition is skewed to low complexity. Positions 785–812 (EQEVRKINEKSAREHRKTEDLLREERQK) form a coiled coil. Basic and acidic residues predominate over residues 790–818 (KINEKSAREHRKTEDLLREERQKEQKPGE). A compositionally biased stretch (polar residues) spans 825 to 842 (PAESLYSTRTPQQEGWSS). Positions 870–884 (PTSSRLSTLDRSSIS) are enriched in low complexity.

Belongs to the protein kinase superfamily. Tyr protein kinase family. Requires Mg(2+) as cofactor.

The enzyme catalyses L-tyrosyl-[protein] + ATP = O-phospho-L-tyrosyl-[protein] + ADP + H(+). The catalysed reaction is L-seryl-[protein] + ATP = O-phospho-L-seryl-[protein] + ADP + H(+). It carries out the reaction L-threonyl-[protein] + ATP = O-phospho-L-threonyl-[protein] + ADP + H(+). Functionally, probable tyrosine protein kinase which plays a role in vulva development, probably by acting as a negative regulator of the let-23/EGFR and let-60/ras pathway. Involved in the negative regulation of germline development. This Caenorhabditis elegans protein is Ack-related non-receptor tyrosine kinase.